We begin with the raw amino-acid sequence, 363 residues long: Protein-glutamate methylesterase/protein-glutamine glutaminase of group 3 operon (363 aa).

Residues 7 to 124 enclose the Response regulatory domain; sequence RVLIVDDSAS…RQALLECSTR (118 aa). Aspartate 58 bears the 4-aspartylphosphate mark. Residues 166-357 enclose the CheB-type methylesterase domain; that stretch reads PTTERIVCIG…REIMLWYQAG (192 aa). Residues serine 177, histidine 203, and aspartate 299 contribute to the active site.

It belongs to the CheB family. Post-translationally, phosphorylated by CheA. Phosphorylation of the N-terminal regulatory domain activates the methylesterase activity.

Its subcellular location is the cytoplasm. It catalyses the reaction [protein]-L-glutamate 5-O-methyl ester + H2O = L-glutamyl-[protein] + methanol + H(+). The catalysed reaction is L-glutaminyl-[protein] + H2O = L-glutamyl-[protein] + NH4(+). Involved in chemotaxis. Part of a chemotaxis signal transduction system that modulates chemotaxis in response to various stimuli. Catalyzes the demethylation of specific methylglutamate residues introduced into the chemoreceptors (methyl-accepting chemotaxis proteins or MCP) by CheR. Also mediates the irreversible deamidation of specific glutamine residues to glutamic acid. This is Protein-glutamate methylesterase/protein-glutamine glutaminase of group 3 operon from Bradyrhizobium diazoefficiens (strain JCM 10833 / BCRC 13528 / IAM 13628 / NBRC 14792 / USDA 110).